The primary structure comprises 510 residues: NAD(P)H-quinone oxidoreductase subunit 2 A, chloroplastic (510 aa).

The next 13 helical transmembrane spans lie at 24-44, 57-77, 99-119, 124-144, 149-169, 183-203, 227-247, 295-315, 323-343, 354-374, 395-415, 418-438, and 484-504; these read LLLF…GLIL, IPWL…ALLF, IFQF…VEYI, MALT…MFLC, LITI…LSGY, YLLM…WLYG, PGIS…LSPA, WHLL…LIAI, MLAY…IVGD, YMLF…LFGL, ALSL…AGFF, IYLF…IGLL, and MIVC…IITI.

Belongs to the complex I subunit 2 family. NDH is composed of at least 16 different subunits, 5 of which are encoded in the nucleus.

The protein resides in the plastid. The protein localises to the chloroplast thylakoid membrane. The enzyme catalyses a plastoquinone + NADH + (n+1) H(+)(in) = a plastoquinol + NAD(+) + n H(+)(out). It catalyses the reaction a plastoquinone + NADPH + (n+1) H(+)(in) = a plastoquinol + NADP(+) + n H(+)(out). In terms of biological role, NDH shuttles electrons from NAD(P)H:plastoquinone, via FMN and iron-sulfur (Fe-S) centers, to quinones in the photosynthetic chain and possibly in a chloroplast respiratory chain. The immediate electron acceptor for the enzyme in this species is believed to be plastoquinone. Couples the redox reaction to proton translocation, and thus conserves the redox energy in a proton gradient. The sequence is that of NAD(P)H-quinone oxidoreductase subunit 2 A, chloroplastic from Spinacia oleracea (Spinach).